A 239-amino-acid polypeptide reads, in one-letter code: Fatty acid metabolism regulator protein (239 aa).

The 69-residue stretch at 6 to 74 (KGPASFAEKY…HGKPTRVNNF (69 aa)) folds into the HTH gntR-type domain. A DNA-binding region (H-T-H motif) is located at residues 34 to 53 (ERELSELIGVTRTTLREVLQ).

In terms of assembly, homodimer.

It localises to the cytoplasm. Multifunctional regulator of fatty acid metabolism. The chain is Fatty acid metabolism regulator protein from Shewanella pealeana (strain ATCC 700345 / ANG-SQ1).